The following is a 384-amino-acid chain: S-adenosylmethionine synthase (384 aa).

Residue H15 participates in ATP binding. D17 contributes to the Mg(2+) binding site. Residue E43 coordinates K(+). L-methionine is bound by residues E56 and Q99. The interval 99-109 (QSPDINQGVDR) is flexible loop. Residues 164 to 166 (DAK), 230 to 231 (RF), D239, 245 to 246 (RK), A262, and K266 contribute to the ATP site. D239 lines the L-methionine pocket. Residue K270 participates in L-methionine binding.

This sequence belongs to the AdoMet synthase family. In terms of assembly, homotetramer; dimer of dimers. The cofactor is Mg(2+). K(+) is required as a cofactor.

Its subcellular location is the cytoplasm. The catalysed reaction is L-methionine + ATP + H2O = S-adenosyl-L-methionine + phosphate + diphosphate. It participates in amino-acid biosynthesis; S-adenosyl-L-methionine biosynthesis; S-adenosyl-L-methionine from L-methionine: step 1/1. Its function is as follows. Catalyzes the formation of S-adenosylmethionine (AdoMet) from methionine and ATP. The overall synthetic reaction is composed of two sequential steps, AdoMet formation and the subsequent tripolyphosphate hydrolysis which occurs prior to release of AdoMet from the enzyme. The polypeptide is S-adenosylmethionine synthase (Escherichia fergusonii (strain ATCC 35469 / DSM 13698 / CCUG 18766 / IAM 14443 / JCM 21226 / LMG 7866 / NBRC 102419 / NCTC 12128 / CDC 0568-73)).